The primary structure comprises 61 residues: uncharacterized protein (61 aa).

A signal peptide spans 1-30; it reads MDVEVANMAAKLRVRGLKLPNAIVVSTAIL.

This is an uncharacterized protein from Archaeoglobus fulgidus (strain ATCC 49558 / DSM 4304 / JCM 9628 / NBRC 100126 / VC-16).